A 70-amino-acid chain; its full sequence is DNA-directed RNA polymerase subunit epsilon (70 aa).

The protein belongs to the RNA polymerase subunit epsilon family. As to quaternary structure, RNAP is composed of a core of 2 alpha, a beta and a beta' subunit. The core is associated with a delta subunit, and at least one of epsilon or omega. When a sigma factor is associated with the core the holoenzyme is formed, which can initiate transcription.

The enzyme catalyses RNA(n) + a ribonucleoside 5'-triphosphate = RNA(n+1) + diphosphate. Functionally, a non-essential component of RNA polymerase (RNAP). In Leuconostoc mesenteroides subsp. mesenteroides (strain ATCC 8293 / DSM 20343 / BCRC 11652 / CCM 1803 / JCM 6124 / NCDO 523 / NBRC 100496 / NCIMB 8023 / NCTC 12954 / NRRL B-1118 / 37Y), this protein is DNA-directed RNA polymerase subunit epsilon.